The sequence spans 369 residues: Cell division protein FtsZ (369 aa).

GTP-binding positions include Gly27 to Asn31, Gly119 to Gly121, Glu150, and Asn189.

Belongs to the FtsZ family. In terms of assembly, homodimer. Polymerizes to form a dynamic ring structure in a strictly GTP-dependent manner. Interacts directly with several other division proteins.

Its subcellular location is the cytoplasm. Essential cell division protein that forms a contractile ring structure (Z ring) at the future cell division site. The regulation of the ring assembly controls the timing and the location of cell division. One of the functions of the FtsZ ring is to recruit other cell division proteins to the septum to produce a new cell wall between the dividing cells. Binds GTP and shows GTPase activity. The polypeptide is Cell division protein FtsZ (Mycoplasma genitalium (strain ATCC 33530 / DSM 19775 / NCTC 10195 / G37) (Mycoplasmoides genitalium)).